A 93-amino-acid chain; its full sequence is Large ribosomal subunit protein uL23 (93 aa).

It belongs to the universal ribosomal protein uL23 family. As to quaternary structure, part of the 50S ribosomal subunit. Contacts protein L29, and trigger factor when it is bound to the ribosome.

In terms of biological role, one of the early assembly proteins it binds 23S rRNA. One of the proteins that surrounds the polypeptide exit tunnel on the outside of the ribosome. Forms the main docking site for trigger factor binding to the ribosome. The chain is Large ribosomal subunit protein uL23 from Campylobacter fetus subsp. fetus (strain 82-40).